Reading from the N-terminus, the 156-residue chain is ATP synthase subunit b (156 aa).

A helical membrane pass occupies residues 5-25; that stretch reads LTMIGQAIAFFIFVVFCMKYV.

The protein belongs to the ATPase B chain family. In terms of assembly, F-type ATPases have 2 components, F(1) - the catalytic core - and F(0) - the membrane proton channel. F(1) has five subunits: alpha(3), beta(3), gamma(1), delta(1), epsilon(1). F(0) has three main subunits: a(1), b(2) and c(10-14). The alpha and beta chains form an alternating ring which encloses part of the gamma chain. F(1) is attached to F(0) by a central stalk formed by the gamma and epsilon chains, while a peripheral stalk is formed by the delta and b chains.

Its subcellular location is the cell inner membrane. In terms of biological role, f(1)F(0) ATP synthase produces ATP from ADP in the presence of a proton or sodium gradient. F-type ATPases consist of two structural domains, F(1) containing the extramembraneous catalytic core and F(0) containing the membrane proton channel, linked together by a central stalk and a peripheral stalk. During catalysis, ATP synthesis in the catalytic domain of F(1) is coupled via a rotary mechanism of the central stalk subunits to proton translocation. Component of the F(0) channel, it forms part of the peripheral stalk, linking F(1) to F(0). This Hahella chejuensis (strain KCTC 2396) protein is ATP synthase subunit b.